Reading from the N-terminus, the 942-residue chain is UvrABC system protein A (942 aa).

An ATP-binding site is contributed by glycine 32–serine 39. A C4-type zinc finger spans residues cysteine 251–cysteine 278. 2 consecutive ABC transporter domains span residues tryptophan 308–isoleucine 589 and glycine 609–lysine 937. Glycine 641 to serine 648 serves as a coordination point for ATP. Residues cysteine 740 to cysteine 766 form a C4-type zinc finger.

It belongs to the ABC transporter superfamily. UvrA family. In terms of assembly, forms a heterotetramer with UvrB during the search for lesions.

Its subcellular location is the cytoplasm. Its function is as follows. The UvrABC repair system catalyzes the recognition and processing of DNA lesions. UvrA is an ATPase and a DNA-binding protein. A damage recognition complex composed of 2 UvrA and 2 UvrB subunits scans DNA for abnormalities. When the presence of a lesion has been verified by UvrB, the UvrA molecules dissociate. The sequence is that of UvrABC system protein A from Streptococcus pyogenes serotype M18 (strain MGAS8232).